A 569-amino-acid chain; its full sequence is Protein THEMIS3 (569 aa).

CABIT regions lie at residues 1 to 254 (MEQT…ARLD) and 255 to 523 (RKPR…EERS).

Belongs to the themis family. Specifically expressed in the intestine.

This Mus musculus (Mouse) protein is Protein THEMIS3 (Themis3).